A 322-amino-acid chain; its full sequence is ATP-dependent 6-phosphofructokinase (322 aa).

Residues G12, 73–74, and 103–106 each bind ATP; these read RF and GDGT. D104 contacts Mg(2+). 126–128 contributes to the substrate binding site; sequence TID. The Proton acceptor role is filled by D128. R155 is an ADP binding site. Substrate is bound by residues R163 and 170 to 172; that span reads MGR. Residues 186–188, K212, and 214–216 each bind ADP; these read GSE and KPS. Residues E223, R245, and 251 to 254 each bind substrate; that span reads HTQR.

This sequence belongs to the phosphofructokinase type A (PFKA) family. ATP-dependent PFK group I subfamily. Prokaryotic clade 'B1' sub-subfamily. In terms of assembly, homotetramer. The cofactor is Mg(2+).

It localises to the cytoplasm. It catalyses the reaction beta-D-fructose 6-phosphate + ATP = beta-D-fructose 1,6-bisphosphate + ADP + H(+). It participates in carbohydrate degradation; glycolysis; D-glyceraldehyde 3-phosphate and glycerone phosphate from D-glucose: step 3/4. Allosterically activated by ADP and other diphosphonucleosides, and allosterically inhibited by phosphoenolpyruvate. Its function is as follows. Catalyzes the phosphorylation of D-fructose 6-phosphate to fructose 1,6-bisphosphate by ATP, the first committing step of glycolysis. This is ATP-dependent 6-phosphofructokinase from Mesomycoplasma hyopneumoniae (strain 7448) (Mycoplasma hyopneumoniae).